Reading from the N-terminus, the 98-residue chain is MFEQRVNSDVLTVATVNSQDQVTQKPLRDSVKQALKNYFAQLNGQDVNDLYELVLAEVEQPLLDMVMQYTRGNQTRAAQMMGINRGTLRKKLKKYGMN.

Positions 74–93 form a DNA-binding region, H-T-H motif; sequence QTRAAQMMGINRGTLRKKLK.

The protein belongs to the transcriptional regulatory Fis family. In terms of assembly, homodimer.

Functionally, activates ribosomal RNA transcription. Plays a direct role in upstream activation of rRNA promoters. The polypeptide is DNA-binding protein Fis (Proteus hauseri).